Consider the following 273-residue polypeptide: Dermonecrotic toxin LhSicTox-alphaIA2aviii (273 aa).

His-5 is an active-site residue. Mg(2+) contacts are provided by Glu-25 and Asp-27. His-41 functions as the Nucleophile in the catalytic mechanism. 2 cysteine pairs are disulfide-bonded: Cys-45-Cys-51 and Cys-47-Cys-190. Asp-85 is a binding site for Mg(2+).

It belongs to the arthropod phospholipase D family. Class II subfamily. Mg(2+) serves as cofactor. As to expression, expressed by the venom gland.

It is found in the secreted. It carries out the reaction an N-(acyl)-sphingosylphosphocholine = an N-(acyl)-sphingosyl-1,3-cyclic phosphate + choline. The enzyme catalyses an N-(acyl)-sphingosylphosphoethanolamine = an N-(acyl)-sphingosyl-1,3-cyclic phosphate + ethanolamine. The catalysed reaction is a 1-acyl-sn-glycero-3-phosphocholine = a 1-acyl-sn-glycero-2,3-cyclic phosphate + choline. It catalyses the reaction a 1-acyl-sn-glycero-3-phosphoethanolamine = a 1-acyl-sn-glycero-2,3-cyclic phosphate + ethanolamine. In terms of biological role, dermonecrotic toxins cleave the phosphodiester linkage between the phosphate and headgroup of certain phospholipids (sphingolipid and lysolipid substrates), forming an alcohol (often choline) and a cyclic phosphate. This toxin acts on sphingomyelin (SM). It may also act on ceramide phosphoethanolamine (CPE), lysophosphatidylcholine (LPC) and lysophosphatidylethanolamine (LPE), but not on lysophosphatidylserine (LPS), and lysophosphatidylglycerol (LPG). It acts by transphosphatidylation, releasing exclusively cyclic phosphate products as second products. Induces dermonecrosis, hemolysis, increased vascular permeability, edema, inflammatory response, and platelet aggregation. In Loxosceles hirsuta (Recluse spider), this protein is Dermonecrotic toxin LhSicTox-alphaIA2aviii.